Here is a 320-residue protein sequence, read N- to C-terminus: MKRIGILTSGGDAPGMNAAVRAVAGKAMAEGLEAYGINYGFAGLVAGDIHKIEAADLDGVIQRGGTLLYSARYPEFAHEEGQLKGIEQLKRFGIDALVVIGGDGSYHGALRLTEHGYNTIGLPGTIDNDIPYTDFTIGFDTAVNTNVQALDRIYDTAHSHDRTFVVEVMGRGAGDVALWSGVSIGATAIVVPEVDWDMEEIANKIKHNRANGHRSNLIVLAEGVMGAQEFVEKLSEYGDFDARGNTIAHMQRGGNPTAKDRVMASKMGAYAVELLLAGKGGLAVGIQNNQLVNHNILDLFESKHDVEVSLDKLNEEISFK.

ATP is bound by residues Gly-11, 72–73 (RY), and 102–105 (GDGS). Residue Asp-103 coordinates Mg(2+). Substrate is bound by residues 125–127 (TID), Arg-162, 169–171 (MGR), Glu-222, Arg-243, and 249–252 (HMQR). Catalysis depends on Asp-127, which acts as the Proton acceptor.

The protein belongs to the phosphofructokinase type A (PFKA) family. ATP-dependent PFK group I subfamily. Prokaryotic clade 'B1' sub-subfamily. Homotetramer. It depends on Mg(2+) as a cofactor.

Its subcellular location is the cytoplasm. It catalyses the reaction beta-D-fructose 6-phosphate + ATP = beta-D-fructose 1,6-bisphosphate + ADP + H(+). It participates in carbohydrate degradation; glycolysis; D-glyceraldehyde 3-phosphate and glycerone phosphate from D-glucose: step 3/4. With respect to regulation, allosterically activated by ADP and other diphosphonucleosides, and allosterically inhibited by phosphoenolpyruvate. In terms of biological role, catalyzes the phosphorylation of D-fructose 6-phosphate to fructose 1,6-bisphosphate by ATP, the first committing step of glycolysis. The chain is ATP-dependent 6-phosphofructokinase from Lactiplantibacillus plantarum (strain ATCC BAA-793 / NCIMB 8826 / WCFS1) (Lactobacillus plantarum).